A 62-amino-acid polypeptide reads, in one-letter code: Beta-defensin 33 (62 aa).

The N-terminal stretch at 1 to 20 is a signal peptide; that stretch reads MRLLFLLFILLVCLAQTTSG. 3 cysteine pairs are disulfide-bonded: cysteine 30-cysteine 59, cysteine 37-cysteine 52, and cysteine 45-cysteine 60.

The protein belongs to the beta-defensin family.

It is found in the secreted. Has antibacterial activity. This chain is Beta-defensin 33 (Defb33), found in Mus musculus (Mouse).